The chain runs to 296 residues: uncharacterized protein (296 aa).

The chain crosses the membrane as a helical span at residues 1-21; that stretch reads MIFAVVDILEISIQLLCILLF.

The protein resides in the membrane. This is an uncharacterized protein from Caenorhabditis elegans.